A 137-amino-acid chain; its full sequence is Ribonuclease P protein component (137 aa).

The protein belongs to the RnpA family. In terms of assembly, consists of a catalytic RNA component (M1 or rnpB) and a protein subunit.

It catalyses the reaction Endonucleolytic cleavage of RNA, removing 5'-extranucleotides from tRNA precursor.. RNaseP catalyzes the removal of the 5'-leader sequence from pre-tRNA to produce the mature 5'-terminus. It can also cleave other RNA substrates such as 4.5S RNA. The protein component plays an auxiliary but essential role in vivo by binding to the 5'-leader sequence and broadening the substrate specificity of the ribozyme. The protein is Ribonuclease P protein component of Porphyromonas gingivalis (strain ATCC 33277 / DSM 20709 / CIP 103683 / JCM 12257 / NCTC 11834 / 2561).